Reading from the N-terminus, the 512-residue chain is Maturase K (512 aa).

Belongs to the intron maturase 2 family. MatK subfamily.

The protein localises to the plastid. Its subcellular location is the chloroplast. Functionally, usually encoded in the trnK tRNA gene intron. Probably assists in splicing its own and other chloroplast group II introns. In Acer campestre (Field maple), this protein is Maturase K.